Consider the following 311-residue polypeptide: Aspartate carbamoyltransferase catalytic subunit (311 aa).

Carbamoyl phosphate is bound by residues arginine 58 and threonine 59. Position 86 (lysine 86) interacts with L-aspartate. Residues arginine 108, histidine 136, and glutamine 139 each contribute to the carbamoyl phosphate site. L-aspartate is bound by residues arginine 169 and arginine 223. Positions 264 and 265 each coordinate carbamoyl phosphate.

It belongs to the aspartate/ornithine carbamoyltransferase superfamily. ATCase family. As to quaternary structure, heterododecamer (2C3:3R2) of six catalytic PyrB chains organized as two trimers (C3), and six regulatory PyrI chains organized as three dimers (R2).

The enzyme catalyses carbamoyl phosphate + L-aspartate = N-carbamoyl-L-aspartate + phosphate + H(+). The protein operates within pyrimidine metabolism; UMP biosynthesis via de novo pathway; (S)-dihydroorotate from bicarbonate: step 2/3. In terms of biological role, catalyzes the condensation of carbamoyl phosphate and aspartate to form carbamoyl aspartate and inorganic phosphate, the committed step in the de novo pyrimidine nucleotide biosynthesis pathway. The protein is Aspartate carbamoyltransferase catalytic subunit of Desulfosudis oleivorans (strain DSM 6200 / JCM 39069 / Hxd3) (Desulfococcus oleovorans).